A 294-amino-acid chain; its full sequence is Thymidylate synthase 1/2 (294 aa).

Residues Arg-29 and 154-155 each bind dUMP; that span reads RR. The active-site Nucleophile is the Cys-174. DUMP contacts are provided by residues 194 to 197, Asn-205, and 235 to 237; these read RSGD and HVY. Residue Asp-197 participates in (6R)-5,10-methylene-5,6,7,8-tetrahydrofolate binding.

The protein belongs to the thymidylate synthase family.

It carries out the reaction dUMP + (6R)-5,10-methylene-5,6,7,8-tetrahydrofolate = 7,8-dihydrofolate + dTMP. Its pathway is pyrimidine metabolism; dTTP biosynthesis. The chain is Thymidylate synthase 1/2 (TS-1) from Encephalitozoon cuniculi (strain GB-M1) (Microsporidian parasite).